A 511-amino-acid chain; its full sequence is 2,3-bisphosphoglycerate-independent phosphoglycerate mutase (511 aa).

Residues D14 and S64 each coordinate Mn(2+). The active-site Phosphoserine intermediate is the S64. Residues H125, 155-156 (RD), R187, R193, 259-262 (RADR), and K333 each bind substrate. The Mn(2+) site is built by D400, H404, D441, H442, and H460.

The protein belongs to the BPG-independent phosphoglycerate mutase family. As to quaternary structure, monomer. The cofactor is Mn(2+).

It carries out the reaction (2R)-2-phosphoglycerate = (2R)-3-phosphoglycerate. It participates in carbohydrate degradation; glycolysis; pyruvate from D-glyceraldehyde 3-phosphate: step 3/5. Functionally, catalyzes the interconversion of 2-phosphoglycerate and 3-phosphoglycerate. The polypeptide is 2,3-bisphosphoglycerate-independent phosphoglycerate mutase (Pseudomonas putida (strain GB-1)).